The following is a 289-amino-acid chain: Acetyl-coenzyme A carboxylase carboxyl transferase subunit beta (289 aa).

Residues 23-289 (HWIKCPSCSA…YDENPCLLHL (267 aa)) enclose the CoA carboxyltransferase N-terminal domain. Residues Cys27, Cys30, Cys46, and Cys49 each coordinate Zn(2+). A C4-type zinc finger spans residues 27-49 (CPSCSALMYYKEVIAQHHVCPKC).

Belongs to the AccD/PCCB family. As to quaternary structure, acetyl-CoA carboxylase is a heterohexamer composed of biotin carboxyl carrier protein (AccB), biotin carboxylase (AccC) and two subunits each of ACCase subunit alpha (AccA) and ACCase subunit beta (AccD). Zn(2+) serves as cofactor.

It is found in the cytoplasm. The catalysed reaction is N(6)-carboxybiotinyl-L-lysyl-[protein] + acetyl-CoA = N(6)-biotinyl-L-lysyl-[protein] + malonyl-CoA. Its pathway is lipid metabolism; malonyl-CoA biosynthesis; malonyl-CoA from acetyl-CoA: step 1/1. In terms of biological role, component of the acetyl coenzyme A carboxylase (ACC) complex. Biotin carboxylase (BC) catalyzes the carboxylation of biotin on its carrier protein (BCCP) and then the CO(2) group is transferred by the transcarboxylase to acetyl-CoA to form malonyl-CoA. The polypeptide is Acetyl-coenzyme A carboxylase carboxyl transferase subunit beta (Wolinella succinogenes (strain ATCC 29543 / DSM 1740 / CCUG 13145 / JCM 31913 / LMG 7466 / NCTC 11488 / FDC 602W) (Vibrio succinogenes)).